A 96-amino-acid chain; its full sequence is Copper-sensing transcriptional repressor RicR (96 aa).

Thr-2 is modified (N-acetylthreonine). Cys-38, His-63, and Cys-67 together coordinate Cu cation.

It belongs to the CsoR family.

The protein localises to the cytoplasm. Under low copper conditions, represses the expression of lpqS, Rv2963, mymT, socA, socB, mmcO and its own expression. In the presence of copper, RicR dissociates from DNA, leading to the expression of the target genes. Members of the RicR regulon are important for copper resistance during infections and full virulence in a mouse model of infection. The polypeptide is Copper-sensing transcriptional repressor RicR (Mycobacterium tuberculosis (strain ATCC 25618 / H37Rv)).